The chain runs to 87 residues: Co-chaperonin GroES (87 aa).

Belongs to the GroES chaperonin family. Heptamer of 7 subunits arranged in a ring. Interacts with the chaperonin GroEL.

It localises to the cytoplasm. Functionally, together with the chaperonin GroEL, plays an essential role in assisting protein folding. The GroEL-GroES system forms a nano-cage that allows encapsulation of the non-native substrate proteins and provides a physical environment optimized to promote and accelerate protein folding. GroES binds to the apical surface of the GroEL ring, thereby capping the opening of the GroEL channel. This Campylobacter hominis (strain ATCC BAA-381 / DSM 21671 / CCUG 45161 / LMG 19568 / NCTC 13146 / CH001A) protein is Co-chaperonin GroES.